We begin with the raw amino-acid sequence, 552 residues long: Pyrophosphate--fructose 6-phosphate 1-phosphotransferase subunit beta (552 aa).

G90 serves as a coordination point for diphosphate. Position 184 (D184) interacts with Mg(2+). Substrate contacts are provided by residues 212–214 (TID), 251–252 (KY), 259–261 (MGR), E320, and 425–428 (YEGR). The active-site Proton acceptor is the D214.

Belongs to the phosphofructokinase type A (PFKA) family. PPi-dependent PFK group II subfamily. Clade 'Long' sub-subfamily. In terms of assembly, tetramer of two alpha (regulatory) and two beta (catalytic) chains. Requires Mg(2+) as cofactor.

It localises to the cytoplasm. The enzyme catalyses beta-D-fructose 6-phosphate + diphosphate = beta-D-fructose 1,6-bisphosphate + phosphate + H(+). It functions in the pathway carbohydrate degradation; glycolysis; D-glyceraldehyde 3-phosphate and glycerone phosphate from D-glucose: step 3/4. Its activity is regulated as follows. Allosterically activated by fructose 2,6-bisphosphate. Catalytic subunit of pyrophosphate--fructose 6-phosphate 1-phosphotransferase. Catalyzes the phosphorylation of D-fructose 6-phosphate, the first committing step of glycolysis. Uses inorganic phosphate (PPi) as phosphoryl donor instead of ATP like common ATP-dependent phosphofructokinases (ATP-PFKs), which renders the reaction reversible, and can thus function both in glycolysis and gluconeogenesis. The chain is Pyrophosphate--fructose 6-phosphate 1-phosphotransferase subunit beta from Ricinus communis (Castor bean).